The primary structure comprises 885 residues: Insulin receptor substrate 1-A (885 aa).

The IRS-type PTB domain maps to 1–56 (MNIRRCGHSENFFFIEVGRSAVTGAGEFWMQVDDSVVAQNMHETILEAMKALSDEF). The segment at 56–225 (FRPRSKSQSS…GGFISSDEYG (170 aa)) is disordered. 4 stretches are compositionally biased toward low complexity: residues 61 to 75 (KSQS…ISVP), 99 to 109 (SATATSPAGGA), 176 to 197 (SPSA…GSTS), and 205 to 217 (SSAS…SDGG). S104 is modified (phosphoserine). Y257 carries the post-translational modification Phosphotyrosine; by INSR. The YXXM motif 1 motif lies at 257 to 260 (YICM). 2 stretches are compositionally biased toward polar residues: residues 263–276 (SSSH…QRYQ) and 296–313 (SSGT…PSQS). Disordered stretches follow at residues 263 to 282 (SSSH…RGEE) and 293 to 313 (RTHS…PSQS). 5 short sequence motifs (YXXM motif) span residues 318–321 (YTEM), 364–367 (YMPM), 381–384 (YMPM), 409–412 (YMMM), and 451–454 (YINM). Residues Y364 and Y381 each carry the phosphotyrosine; by INSR modification. Y409 carries the phosphotyrosine modification. Residues 501–581 (NLRISANSGH…LPPEPKSPGE (81 aa)) are disordered. Residues 504–515 (ISANSGHNLYTE) are compositionally biased toward polar residues. Residues 516–526 (DSSSSSTSSDS) are compositionally biased toward low complexity. Phosphotyrosine; by INSR occurs at positions 582 and 620. Residues 582 to 584 (YVN) are GRB2-binding. The YXXM motif 7 signature appears at 620–623 (YMNM). Residues 637–660 (TSSYEPPNKPVNSVCPTETCSSSR) are compositionally biased toward polar residues. Positions 637-665 (TSSYEPPNKPVNSVCPTETCSSSRPPIRG) are disordered. Phosphotyrosine; by INSR is present on Y672. Short sequence motifs (YXXM motif) lie at residues 672–675 (YMSM) and 706–709 (YAEM). Residues 732–803 (ASRSSLLGQG…SGEDVKRHSS (72 aa)) are disordered. Composition is skewed to polar residues over residues 743–758 (GPSA…NRNP) and 777–792 (ETFS…TTGP). Phosphotyrosine; by INSR is present on residues Y834 and Y866.

In terms of assembly, interacts with the NPXY motif of tyrosine-phosphorylated igf1r and insr via the PTB domain. Binds to phosphatidylinositol 3-kinase p85 subunit at a low level in vitro prior to phosphorylation. Binding is greatly enhanced following tyrosine phosphorylation by insr and probably occurs via the phosphorylated YXXM motifs. In terms of processing, phosphorylation of Tyr-582 is required for grb2-binding.

May mediate the control of various cellular processes by insulin. When phosphorylated by the insulin receptor binds specifically to various cellular proteins containing SH2 domains such as phosphatidylinositol 3-kinase p85 subunit or grb2. Activates phosphatidylinositol 3-kinase when bound to the regulatory p85 subunit. The polypeptide is Insulin receptor substrate 1-A (irs1-a) (Xenopus laevis (African clawed frog)).